A 1245-amino-acid chain; its full sequence is Pesticidal crystal protein Cry5Ba (1245 aa).

The segment at 1219–1245 (PLPTDDQSSDGNTTSNTNSNTSMNNNQ) is disordered. Residues 1222–1245 (TDDQSSDGNTTSNTNSNTSMNNNQ) show a composition bias toward low complexity.

It belongs to the delta endotoxin family.

In terms of biological role, promotes colloidosmotic lysis by binding to the midgut epithelial cells of hymenopteran species. In Bacillus thuringiensis, this protein is Pesticidal crystal protein Cry5Ba (cry5Ba).